Consider the following 104-residue polypeptide: Transcription elongation factor A protein-like 9 (104 aa).

The tract at residues 1–48 is disordered; that stretch reads MKPCQKMEGNLEKEDEPKPEEEPKPEEKPEEGQEPEEEEKSEETFRER. Basic and acidic residues predominate over residues 9–31; it reads GNLEKEDEPKPEEEPKPEEKPEE. A compositionally biased stretch (acidic residues) spans 32–41; that stretch reads GQEPEEEEKS.

The protein belongs to the TFS-II family. TFA subfamily.

It localises to the nucleus. Functionally, may be involved in transcriptional regulation. This chain is Transcription elongation factor A protein-like 9 (Tceal9), found in Mus musculus (Mouse).